Consider the following 238-residue polypeptide: NAD(P)H-hydrate epimerase (238 aa).

The 216-residue stretch at Ala10–Leu225 folds into the YjeF N-terminal domain. Residue Asn68–Asp72 participates in (6S)-NADPHX binding. K(+) is bound by residues Asn69 and Asp133. (6S)-NADPHX contacts are provided by residues Gly137–Pro143 and Asp166. Ser169 serves as a coordination point for K(+).

This sequence belongs to the NnrE/AIBP family. K(+) serves as cofactor.

It carries out the reaction (6R)-NADHX = (6S)-NADHX. It catalyses the reaction (6R)-NADPHX = (6S)-NADPHX. In terms of biological role, catalyzes the epimerization of the S- and R-forms of NAD(P)HX, a damaged form of NAD(P)H that is a result of enzymatic or heat-dependent hydration. This is a prerequisite for the S-specific NAD(P)H-hydrate dehydratase to allow the repair of both epimers of NAD(P)HX. The sequence is that of NAD(P)H-hydrate epimerase from Drosophila willistoni (Fruit fly).